The following is a 449-amino-acid chain: Naphthalene 1,2-dioxygenase system, large oxygenase component (449 aa).

The region spanning Trp39–Glu137 is the Rieske domain. [2Fe-2S] cluster-binding residues include Cys81, His83, Cys101, and His104. Residues His208, His213, and Asp362 each coordinate Fe cation.

The protein belongs to the bacterial ring-hydroxylating dioxygenase alpha subunit family. The naphthalene dioxygenase (NDO) multicomponent enzyme system is composed of an electron transfer component and a dioxygenase component (iron sulfur protein (ISP)). The electron transfer component is composed of a ferredoxin reductase (NdoR) and a ferredoxin (NdoA), and the dioxygenase component is formed of a heterohexamer (trimer of heterodimers) of three large alpha subunits (NdoB) and three small beta subunits (NdoC). The cofactor is [2Fe-2S] cluster. It depends on Fe(2+) as a cofactor.

The catalysed reaction is naphthalene + NADH + O2 + H(+) = (1R,2S)-1,2-dihydronaphthalene-1,2-diol + NAD(+). The protein operates within aromatic compound metabolism; naphthalene degradation. Functionally, component of the naphthalene dioxygenase (NDO) multicomponent enzyme system which catalyzes the incorporation of both atoms of molecular oxygen into naphthalene to form cis-(1R,2S)-dihydroxy-1,2-dihydronaphthalene. The alpha subunit has a catalytic role in the holoenzyme. The polypeptide is Naphthalene 1,2-dioxygenase system, large oxygenase component (Pseudomonas fluorescens).